Consider the following 426-residue polypeptide: 6-Hydroxy-7-prenyldeoxybrevianamide E synthase notC' (426 aa).

Position 94 (Glu94) interacts with substrate. Residues Arg105, Lys191, and Tyr193 each coordinate dimethylallyl diphosphate. Tyr195 provides a ligand contact to substrate. 6 residues coordinate dimethylallyl diphosphate: Lys267, Tyr269, Gln352, Tyr354, Tyr418, and Tyr422.

It belongs to the tryptophan dimethylallyltransferase family.

The enzyme catalyses 6-hydroxydeoxybrevianamide E + dimethylallyl diphosphate = notoamide S + diphosphate. It participates in alkaloid biosynthesis. Functionally, prenyltransferase; part of the gene cluster that mediates the biosynthesis of notoamide, a fungal indole alkaloid that belongs to a family of natural products containing a characteristic bicyclo[2.2.2]diazaoctane core. The first step of notoamide biosynthesis involves coupling of L-proline and L-tryptophan by the bimodular NRPS notE', to produce cyclo-L-tryptophan-L-proline called brevianamide F. The reverse prenyltransferase notF' then acts as a deoxybrevianamide E synthase and converts brevianamide F to deoxybrevianamide E via reverse prenylation at C-2 of the indole ring leading to the bicyclo[2.2.2]diazaoctane core. Deoxybrevianamide E is further hydroxylated at C-6 of the indole ring, likely catalyzed by the cytochrome P450 monooxygenase notG', to yield 6-hydroxy-deoxybrevianamide E. 6-hydroxy-deoxybrevianamide E is a specific substrate of the prenyltransferase notC' for normal prenylation at C-7 to produce 6-hydroxy-7-prenyl-deoxybrevianamide, also called notoamide S. As the proposed pivotal branching point in notoamide biosynthesis, notoamide S can be diverted to notoamide E through an oxidative pyran ring closure putatively catalyzed by either notH' cytochrome P450 monooxygenase or the notD' FAD-linked oxidoreductase. This step would be followed by an indole 2,3-epoxidation-initiated pinacol-like rearrangement catalyzed by the notB' FAD-dependent monooxygenase leading to the formation of notoamide C and notoamide D. On the other hand notoamide S is converted to notoamide T by notH' (or notD'), a bifunctional oxidase that also functions as the intramolecular Diels-Alderase responsible for generation of (-)-notoamide T. To generate antipodal (+)-notoaminide T, notH (or notD) in Aspergillus strain MF297-2 is expected to catalyze a Diels-Alder reaction leading to the opposite stereochemistry. The remaining oxidoreductase notD' (or notH') likely catalyzes the oxidative pyran ring formation to yield (-)-stephacidin A. The FAD-dependent monooxygenase notI' is highly similar to notB' and is predicted to catalyze a similar conversion from (-)-stephacidin A to (+)-notoamide B via the 2,3-epoxidation of (-)-stephacidin A followed by a pinacol-type rearrangement. Finally, it remains unclear which enzyme could be responsible for the final hydroxylation steps leading to notoamide A and sclerotiamide. The chain is 6-Hydroxy-7-prenyldeoxybrevianamide E synthase notC' from Aspergillus versicolor.